We begin with the raw amino-acid sequence, 564 residues long: 2-succinyl-5-enolpyruvyl-6-hydroxy-3-cyclohexene-1-carboxylate synthase (564 aa).

Belongs to the TPP enzyme family. MenD subfamily. As to quaternary structure, homodimer. It depends on Mg(2+) as a cofactor. The cofactor is Mn(2+). Thiamine diphosphate serves as cofactor.

The enzyme catalyses isochorismate + 2-oxoglutarate + H(+) = 5-enolpyruvoyl-6-hydroxy-2-succinyl-cyclohex-3-ene-1-carboxylate + CO2. It functions in the pathway quinol/quinone metabolism; 1,4-dihydroxy-2-naphthoate biosynthesis; 1,4-dihydroxy-2-naphthoate from chorismate: step 2/7. It participates in quinol/quinone metabolism; menaquinone biosynthesis. Catalyzes the thiamine diphosphate-dependent decarboxylation of 2-oxoglutarate and the subsequent addition of the resulting succinic semialdehyde-thiamine pyrophosphate anion to isochorismate to yield 2-succinyl-5-enolpyruvyl-6-hydroxy-3-cyclohexene-1-carboxylate (SEPHCHC). The sequence is that of 2-succinyl-5-enolpyruvyl-6-hydroxy-3-cyclohexene-1-carboxylate synthase from Vibrio vulnificus (strain CMCP6).